The following is a 2432-amino-acid chain: MAAKVHVDIEADSPFIKSLQKAFPSFEVESLQVTPNDHANARAFSHLATKLIEQETDKDTLILDIGSAPSRRMMSTHKYHCVCPMRSAEDPERLVCYAKKLAAASGKVLDREIAGKITDLQTVMATPDAESPTFCLHTDVTCRTAAEVAVYQDVYAVHAPTSLYHQAMKGVRTAYWIGFDTTPFMFDALAGAYPTYATNWADEQVLQARNIGLCAASLTEGRLGKLSILRKKQLKPCDTVMFSVGSTLYTESRKLLRSWHLPSVFHLKGKQSFTCRCDTIVSCEGYVVKKITMCPGLYGKTVGYAVTYHAEGFLVCKTTDTVKGERVSFPVCTYVPSTICDQMTGILATDVTPEDAQKLLVGLNQRIVVNGRTQRNTNTMKNYLLPIVAVAFSKWAREYKADLDDEKPLGVRERSLTCCCLWAFKTRKMHTMYKKPDTQTIVKVPSEFNSFVIPSLWSTGLAIPVRSRIKMLLAKKTKRELIPVLDASSARDAEQEEKERLEAELTREALPPLVPIAPAETGVVDVDVEELEYHAGAGVVETPRSALKVTAQPNDVLLGNYVVLSPQTVLKSSKLAPVHPLAEQVKIITHNGRAGRYQVDGYDGRVLLPCGSAIPVPEFQALSESATMVYNEREFVNRKLYHIAVHGPSLNTDEENYEKVRAERTDAEYVFDVDKKCCVKREEASGLVLVGELTNPPFHEFAYEGLKIRPSAPYKTTVVGVFGVPGSGKSAIIKSLVTKHDLVTSGKKENCQEIVNDVKKHRGLDIQAKTVDSILLNGCRRAVDILYVDEAFACHSGTLLALIALVKPRSKVVLCGDPKQCGFFNMMQLKVNFNHNICTEVCHKSISRRCTRPVTAIVSTLHYGGKMRTTNPCNKPIIIDTTGQTKPKPGDIVLTCFRGWVKQLQLDYRGHEVMTAAASQGLTRKGVYAVRQKVNENPLYAPASEHVNVLLTRTEDRLVWKTLAGDPWIKVLSNIPQGNFTATLEEWQEEHDKIMKVIEGPAAPVDAFQNKANVCWAKSLVPVLDTAGIRLTAEEWSTIITAFKEDRAYSPVVALNEICTKYYGVDLDSGLFSAPKVSLYYENNHWDNRPGGRMYGFNAATAARLEARHTFLKGQWHTGKQAVIAERKIQPLSVLDNVIPINRRLPHALVAEYKTVKGSRVEWLVNKVRGYHVLLVSEYNLALPRRRVTWLSPLNVTGADRCYDLSLGLPADAGRFDLVFVNIHTEFRIHHYQQCVDHAMKLQMLGGDALRLLKPGGSLLMRAYGYADKISEAVVSSLSRKFSSARVLRPDCVTSNTEVFLLFSNFDNGKRPSTLHQMNTKLSAVYAGEAMHTAGCAPSYRVKRADIATCTEAAVVNAANARGTVGDGVCRAVAKKWPSAFKGAATPVGTIKTVMCGSYPVIHAVAPNFSATTEAEGDRELAAVYRAVAAEVNRLSLSSVAIPLLSTGVFSGGRDRLQQSLNHLFTAMDATDADVTIYCRDKSWEKKIQEAIDMRTAVELLNDDVELTTDLVRVHPDSSLVGRKGYSTTDGSLYSYFEGTKFNQAAIDMAEILTLWPRLQEANEQICLYALGETMDNIRSKCPVNDSDSSTPPRTVPCLCRYAMTAERIARLRSHQVKSMVVCSSFPLPKYHVDGVQKVKCEKGLLFDPTVPSVVSPRKYAASTTDHSDRSLRGFDLDWTTDSSSTASDTMSLPSLQSCDIDSIYEPMAPIVVTADVHPEPAGIADLAADVHPEPADHVDLENPIPPPRPKRAAYLASRAAERPVPAPRKPTPAPRTAFRNKLPLTFGDFDEHEVDALASGITFGDFDDVLRLGRAGAYIFSSDTGSGHLQQKSVRQHNLQCAQLDAVEEEKMYPPKLDTEREKLLLLKMQMHPSEANKSRYQSRKVENMKATVVDRLTSGARLYTGADVGRIPTYAVRYPRPVYSPTVIERFSSPDVAIAACNEYLSRNYPTVASYQITDEYDAYLDMVDGSDSCLDRATFCPAKLRCYPKHHAYHQPTVRSAVPSPFQNTLQNVLAAATKRNCNVTQMRELPTMDSAVFNVECFKRYACSGEYWEEYAKQPIRITTENITTYVTKLKGPKAAALFAKTHNLVPLQEVPMDRFTVDMKRDVKVTPGTKHTEERPKVQVIQAAEPLATAYLCGIHRELVRRLNAVLRPNVHTLFDMSAEDFDAIIASHFHPGDPVLETDIASFDKSQDDSLALTGLMILEDLGVDQYLLDLIEAAFGEISSCHLPTGTRFKFGAMMKSGMFLTLFINTVLNITIASRVLEQRLTDSACAAFIGDDNIVHGVISDKLMAERCASWVNMEVKIIDAVMGEKPPYFCGGFIVFDSVTQTACRVSDPLKRLFKLGKPLTAEDKQDEDRRRALSDEVSKWFRTGLGAELEVALTSRYEVEGCKSILIAMATLARDIKAFKKLRGPVIHLYGGPRLVR.

Positions 29–260 (ESLQVTPNDH…ESRKLLRSWH (232 aa)) constitute an Alphavirus-like MT domain. The interval 245 to 264 (GSTLYTESRKLLRSWHLPSV) is nsP1 membrane-binding. S-palmitoyl cysteine; by host attachment occurs at residues C418 and C420. The region spanning 692 to 844 (ELTNPPFHEF…HNICTEVCHK (153 aa)) is the (+)RNA virus helicase ATP-binding domain. A ribonucleoside 5'-triphosphate is bound at residue 723 to 730 (GVPGSGKS). Residues 845–993 (SISRRCTRPV…LEEWQEEHDK (149 aa)) enclose the (+)RNA virus helicase C-terminal domain. One can recognise a Peptidase C9 domain in the interval 1006-1329 (DAFQNKANVC…TKLSAVYAGE (324 aa)). Positions 1007 to 1026 (AFQNKANVCWAKSLVPVLDT) are nucleolus localization signal. Catalysis depends on C1015, which acts as the For cysteine protease nsP2 activity. Residues 1060-1069 (TKYYGVDLDS) carry the Nuclear export signal motif. H1085 (for cysteine protease nsP2 activity) is an active-site residue. Positions 1184 to 1188 (PRRRV) match the Nuclear localization signal motif. The Macro domain occupies 1337-1495 (APSYRVKRAD…KKIQEAIDMR (159 aa)). The ADP-D-ribose site is built by D1346, N1360, G1368, G1448, V1449, and F1450. Residues C1598, C1600, C1623, and C1641 each contribute to the Zn(2+) site. Residues T1680 and T1681 each carry the phosphothreonine; by host modification. The segment at 1759-1779 (RAAERPVPAPRKPTPAPRTAF) is disordered. The span at 1765–1774 (VPAPRKPTPA) shows a compositional bias: pro residues. 2 consecutive short sequence motifs (FGDF; binding to host G3BP1) follow at residues 1787 to 1790 (FGDF) and 1804 to 1807 (FGDF). Positions 2182 to 2297 (GDPVLETDIA…VHGVISDKLM (116 aa)) constitute a RdRp catalytic domain.

As to quaternary structure, interacts with non-structural protein 3. Interacts with RNA-directed RNA polymerase nsP4. Interacts with protease nsP2. interacts with itself. In terms of assembly, interacts with mRNA-capping enzyme nsP1. Interacts with host DDX1. Interacts with host DDX3. Interacts (via C-terminus) with host G3BP1; this interaction inhibits the formation of host stress granules on viral mRNAs and the nsp3-G3BP1 complexes bind viral RNAs and probably orchestrate the assembly of viral replication complexes. Interacts (via C-terminus) with host G3BP2; this interaction inhibits the formation of host stress granules on viral mRNAs and the nsp3-G3BP2 complexes bind viral RNAs and probably orchestrate the assembly of viral replication complexes. Interacts with mRNA-capping enzyme nsP1. Interacts with protease nsP2. interacts with itself. As to quaternary structure, interacts with RNA-directed RNA polymerase nsP4. Interacts with mRNA-capping enzyme nsP1. Interacts with KPNA1/karyopherin-alpha1; this interaction probably allows the active transport of protease nsP2 into the host nucleus. Requires Mg(2+) as cofactor. Mn(2+) is required as a cofactor. Post-translationally, specific enzymatic cleavages in vivo yield mature proteins. The processing of the polyprotein is temporally regulated. In early stages (1.7 hpi), P1234 is first cleaved in trans through its nsP2 protease activity, releasing P123' and nsP4, which associate to form the early replication complex. At the same time, P1234 is also cut at the nsP1/nsP2 site early in infection but with lower efficiency. After replication of the viral minus-strand RNAs (4 hpi), the polyproteins are cut at the nsP1/nsP2 and nsP2/nsP3 sites very efficiently, preventing accumulation of P123' and P1234 and allowing the formation of the late replication complex. NsP3'/nsP4 site is not cleaved anymore and P34 is produced rather than nsP4. Specific enzymatic cleavages in vivo yield mature proteins. The processing of the polyprotein is temporally regulated. In early stages (1.7 hpi), P123' is cleaved at the nsP1/nsP2 site with low efficiency. After replication of the viral minus-strand RNAs (4 hpi), the polyproteins are cut at the nsP1/nsP2 and nsP2/nsP3 sites very efficiently, preventing accumulation of P123' and allowing the formation of the late replication complex. In terms of processing, specific enzymatic cleavages in vivo yield mature proteins. The processing of the polyprotein is temporally regulated. In early stages (1.7 hpi), P123 is cleaved at the nsP1/nsP2 site with low efficiency. After replication of the viral minus-strand RNAs (4 hpi), the polyproteins are cut at the nsP1/nsP2 and nsP2/nsP3 sites very efficiently, preventing accumulation of P123 and allowing the formation of the late replication complex. Post-translationally, palmitoylated by host palmitoyltransferases ZDHHC2 and ZDHHC19. Phosphorylated by host on serines and threonines. In terms of processing, ubiquitinated; targets the protein for rapid degradation via the ubiquitin system. Nsp4 is present in extremely low quantities due to low frequency of translation through the amber stop-codon and the degradation by the ubiquitin pathway.

The protein localises to the host cytoplasmic vesicle membrane. It is found in the host cell membrane. The protein resides in the host cell projection. It localises to the host filopodium. Its subcellular location is the host nucleus. The protein localises to the host cytoplasm. It carries out the reaction GTP + S-adenosyl-L-methionine = N(7)-methyl-GTP + S-adenosyl-L-homocysteine. It catalyses the reaction N(7)-methyl-GTP + L-histidyl-[protein] = N(tele)-(N(7)-methylguanosine 5'-phospho)-L-histidyl-[protein] + diphosphate. The enzyme catalyses N(tele)-(N(7)-methylguanosine 5'-phospho)-L-histidyl-[protein] + a 5'-end diphospho-(purine-ribonucleoside) in mRNA + H(+) = a 5'-end (N(7)-methyl 5'-triphosphoguanosine)-(purine-ribonucleoside) in mRNA + L-histidyl-[protein]. The catalysed reaction is a 5'-end triphospho-ribonucleoside in mRNA + H2O = a 5'-end diphospho-ribonucleoside in mRNA + phosphate + H(+). It carries out the reaction a ribonucleoside 5'-triphosphate + H2O = a ribonucleoside 5'-diphosphate + phosphate + H(+). It catalyses the reaction ATP + H2O = ADP + phosphate + H(+). The enzyme catalyses RNA(n) + a ribonucleoside 5'-triphosphate = RNA(n+1) + diphosphate. The catalysed reaction is RNA(n) + ATP = RNA(n)-3'-adenine ribonucleotide + diphosphate. It carries out the reaction 4-O-(ADP-D-ribosyl)-L-aspartyl-[protein] + H2O = L-aspartyl-[protein] + ADP-D-ribose + H(+). It catalyses the reaction 5-O-(ADP-D-ribosyl)-L-glutamyl-[protein] + H2O = L-glutamyl-[protein] + ADP-D-ribose + H(+). The enzyme catalyses ADP-alpha-D-ribose 1''-phosphate + H2O = ADP-D-ribose + phosphate. Inhibited by N-ethylmaleimide, Zn(2+), and Cu2(2+). In terms of biological role, inactive precursor of the viral replicase, which is activated by cleavages carried out by the viral protease nsP2. The early replication complex formed by the polyprotein P123 and nsP4 synthesizes minus-strand RNAs. As soon P123 is cleaved into mature proteins, the plus-strand RNAs synthesis begins. Its function is as follows. The early replication complex formed by the polyprotein P123' and nsP4 synthesizes minus-strand RNAs. Polyprotein P123' is a short-lived polyprotein that accumulates during early stage of infection. As soon P123' is cleaved into mature proteins, the plus-strand RNAs synthesis begins. Functionally, cytoplasmic capping enzyme that catalyzes two virus-specific reactions: methyltransferase and nsP1 guanylyltransferase. mRNA-capping is necessary since all viral RNAs are synthesized in the cytoplasm, and host capping enzymes are restricted to the nucleus. The enzymatic reaction involves a covalent link between 7-methyl-GMP and nsP1, whereas eukaryotic capping enzymes form a covalent complex only with GMP. nsP1 capping consists in the following reactions: GTP is first methylated into 7-methyl-GMP and then is covalently linked to nsP1 to form the m7GMp-nsP1 complex from which 7-methyl-GMP complex is transferred to the mRNA to create the cap structure. NsP1 is also needed for the initiation of the minus-strand RNAs synthesis. Probably serves as a membrane anchor for the replication complex composed of nsP1-nsP4. Palmitoylated nsP1 is remodeling host cell cytoskeleton, and induces filopodium-like structure formation at the surface of the host cell. In terms of biological role, multifunctional protein whose N-terminus is part of the RNA polymerase complex and displays NTPase, RNA triphosphatase and helicase activities. NTPase and RNA triphosphatase are involved in viral RNA capping and helicase keeps a check on the dsRNA replication intermediates. The C-terminus harbors a protease that specifically cleaves and releases the mature proteins. Required for the shutoff of minus-strand RNAs synthesis. Specifically inhibits the host IFN response by promoting the nuclear export of host STAT1. Also inhibits host transcription by inducing rapid proteasome-dependent degradation of POLR2A, a catalytic subunit of the RNAPII complex. The resulting inhibition of cellular protein synthesis serves to ensure maximal viral gene expression and to evade host immune response. Seems to be essential for minus-strand RNAs and subgenomic 26S mRNAs synthesis. Displays mono-ADP-ribosylhydrolase activity. ADP-ribosylation is a post-translational modification that controls various processes of the host cell and the virus probably needs to revert it for optimal viral replication. Binds proteins of FXR family and sequesters them into the viral RNA replication complexes thereby inhibiting the formation of host stress granules on viral mRNAs. The nsp3'-FXR complexes bind viral RNAs and probably orchestrate the assembly of viral replication complexes, thanks to the ability of FXR family members to self-assemble and bind DNA. Its function is as follows. Seems to be essential for minus-strand RNAs and subgenomic 26S mRNAs synthesis. Displays mono-ADP-ribosylhydrolase activity. ADP-ribosylation is a post-translational modification that controls various processes of the host cell and the virus probably needs to revert it for optimal viral replication. Binds proteins of G3BP family and sequesters them into the viral RNA replication complexes thereby inhibiting the formation of host stress granules on viral mRNAs. The nsp3-G3BP complexes bind viral RNAs and probably orchestrate the assembly of viral replication complexes, thanks to the ability of G3BP family members to self-assemble and bind DNA. Functionally, RNA dependent RNA polymerase. Replicates genomic and antigenomic RNA by recognizing replications specific signals. The early replication complex formed by the polyprotein P123 and nsP4 synthesizes minus-strand RNAs. The late replication complex composed of fully processed nsP1-nsP4 is responsible for the production of genomic and subgenomic plus-strand RNAs. The protein is Polyprotein P1234 of Aedes (Middle-African hedgehog).